Reading from the N-terminus, the 199-residue chain is Alpha-D-glucose 1-phosphate phosphatase YihX (199 aa).

Residue Asp-6 is the Nucleophile of the active site. Residue Asp-6 participates in Mg(2+) binding. Substrate is bound by residues 6 to 8 (DLG), 107 to 108 (SN), Lys-141, and Asp-166. Asp-166 lines the Mg(2+) pocket.

Belongs to the HAD-like hydrolase superfamily. YihX family. It depends on Mg(2+) as a cofactor. The cofactor is Mn(2+). Co(2+) serves as cofactor. Zn(2+) is required as a cofactor.

It catalyses the reaction alpha-D-glucose 1-phosphate + H2O = D-glucose + phosphate. Catalyzes the dephosphorylation of alpha-D-glucose 1-phosphate (Glc1P) and, to a lesser extent, of other sugar phosphates. Has no activity with the beta form of Glc1P. In addition, YihX has significant phosphatase activity against pyridoxal phosphate (PLP) and low beta-phosphoglucomutase activity. In Escherichia coli (strain K12), this protein is Alpha-D-glucose 1-phosphate phosphatase YihX (yihX).